A 161-amino-acid polypeptide reads, in one-letter code: Phosphopantetheine adenylyltransferase (161 aa).

Residue Ser-9 participates in substrate binding. ATP contacts are provided by residues 9 to 10 (SF) and His-17. The substrate site is built by Lys-41, Leu-73, and Arg-87. ATP-binding positions include 88–90 (GLR), Glu-98, and 123–129 (YTFISSS).

The protein belongs to the bacterial CoaD family. As to quaternary structure, homohexamer. It depends on Mg(2+) as a cofactor.

It localises to the cytoplasm. The catalysed reaction is (R)-4'-phosphopantetheine + ATP + H(+) = 3'-dephospho-CoA + diphosphate. Its pathway is cofactor biosynthesis; coenzyme A biosynthesis; CoA from (R)-pantothenate: step 4/5. Reversibly transfers an adenylyl group from ATP to 4'-phosphopantetheine, yielding dephospho-CoA (dPCoA) and pyrophosphate. This chain is Phosphopantetheine adenylyltransferase, found in Syntrophomonas wolfei subsp. wolfei (strain DSM 2245B / Goettingen).